An 860-amino-acid chain; its full sequence is Protein argonaute-2 (860 aa).

3'-nitrotyrosine is present on Tyr2. A PAZ domain is found at 230-349; sequence PVIEFVCEVL…LPLEVCNIVA (120 aa). The interaction with guide RNA stretch occupies residues 312–317; that stretch reads YFKDRH. Ser388 is modified (phosphoserine). Residues 518 to 819 enclose the Piwi domain; it reads LVVVILPGKT…VAFRARYHLV (302 aa). The tract at residues 525–567 is interaction with guide RNA; sequence GKTPVYAEVKRVGDTVLGMATQCVQMKNVQRTTPQTLSNLCLK. The interaction with GW182 family members stretch occupies residues 588-591; sequence FQQP. An a divalent metal cation-binding site is contributed by Asp598. Residues 651–661 form an interaction with GW182 family members region; that stretch reads LIQFYKSTRFK. Residue Asp670 coordinates a divalent metal cation. 4-hydroxyproline is present on Pro701. Interaction with guide RNA regions lie at residues 710–711, 754–762, and 791–813; these read KR, HAGIQGTSR, and YVRC…VAFR. His808 contributes to the a divalent metal cation binding site. 4 positions are modified to phosphoserine: Ser825, Ser829, Ser832, and Ser835.

The protein belongs to the argonaute family. Ago subfamily. Interacts with DICER1 through its Piwi domain and with TARBP2 during assembly of the RNA-induced silencing complex (RISC). Together, DICER1, AGO2 and TARBP2 constitute the trimeric RISC loading complex (RLC), or micro-RNA (miRNA) loading complex (miRLC). Within the RLC/miRLC, DICER1 and TARBP2 are required to process precursor miRNAs (pre-miRNAs) to mature miRNAs and then load them onto AGO2. AGO2 bound to the mature miRNA constitutes the minimal RISC and may subsequently dissociate from DICER1 and TARBP2. Note however that the term RISC has also been used to describe the trimeric RLC/miRLC. The formation of RISC complexes containing siRNAs rather than miRNAs appears to occur independently of DICER1. Interacts with AGO1. Also interacts with DDB1, DDX5, DDX6, DDX20, DHX30, DHX36, DDX47, DHX9, ELAVL, FXR1, GEMIN4, HNRNPF, IGF2BP1, ILF3, IMP8, MATR3, PABPC1, PRMT5, P4HA1, P4HB, RBM4, SART3, TNRC6A, TNRC6B, UPF1 and YBX1. Interacts with the P-body components DCP1A and XRN1. Associates with polysomes and messenger ribonucleoproteins (mNRPs). Interacts with RBM4; the interaction is modulated under stress-induced conditions, occurs under both cell proliferation and differentiation conditions and in an RNA- and phosphorylation-independent manner. Interacts with LIMD1, WTIP and AJUBA. Interacts with TRIM71; the interaction increases in presence of RNA. Interacts with APOBEC3G in an RNA-dependent manner. Interacts with APOBEC3A, APOBEC3C, APOBEC3F and APOBEC3H. Interacts with DICER1, TARBP2, EIF6, MOV10 and RPL7A (60S ribosome subunit); they form a large RNA-induced silencing complex (RISC). Interacts with FMR1. Interacts with ZFP36. Interacts with RC3H1; the interaction is RNA independent. Found in a complex, composed of AGO2, CHD7 and ARB2A. Interacts with SND1 and SYT11. Interacts with CLNK. Interacts with GARRE1. Interacts with GRB2; this interaction is important for the formation of a ternary complex containing GRB2, AGO2 and DICER1. The cofactor is Mg(2+). Mn(2+) is required as a cofactor. Hydroxylated. 4-hydroxylation appears to enhance protein stability but is not required for miRNA-binding or endonuclease activity. In terms of processing, ubiquitinated on surface-exposed lysines by a SCF-like E3 ubiquitin-protein ligase complex containing ZSWIM8 during target-directed microRNA degradation (TDMD), a process that mediates degradation of microRNAs (miRNAs). Ubiquitination by the SCF-like E3 ubiquitin-protein ligase complex containing ZSWIM8 leads to its subsequent degradation, thereby exposing miRNAs for degradation. ZSWIM8 recognizes and binds AGO2 when it is engaged with a TDMD target. Post-translationally, phosphorylation at Ser-388 by AKT3; leads to up-regulate translational repression of microRNA target and down-regulate endonucleolytic cleavage. A phosphorylation cycle of C-terminal serine cluster (Ser-825-Ser-835) regulates the release of target mRNAs. Target-binding leads to phosphorylation of these residues by CSNK1A1, which reduces the affinity of AGO2 for mRNA and enables target release. The ANKRD52-PPP6C phosphatase complex dephosphorylates the residues, which primes AGO2 for binding a new target.

The protein resides in the cytoplasm. Its subcellular location is the P-body. It is found in the nucleus. It carries out the reaction Endonucleolytic cleavage to 5'-phosphomonoester.. Functionally, required for RNA-mediated gene silencing (RNAi) by the RNA-induced silencing complex (RISC). The 'minimal RISC' appears to include AGO2 bound to a short guide RNA such as a microRNA (miRNA) or short interfering RNA (siRNA). These guide RNAs direct RISC to complementary mRNAs that are targets for RISC-mediated gene silencing. The precise mechanism of gene silencing depends on the degree of complementarity between the miRNA or siRNA and its target. Binding of RISC to a perfectly complementary mRNA generally results in silencing due to endonucleolytic cleavage of the mRNA specifically by AGO2. Binding of RISC to a partially complementary mRNA results in silencing through inhibition of translation, and this is independent of endonuclease activity. May inhibit translation initiation by binding to the 7-methylguanosine cap, thereby preventing the recruitment of the translation initiation factor eIF4-E. May also inhibit translation initiation via interaction with EIF6, which itself binds to the 60S ribosomal subunit and prevents its association with the 40S ribosomal subunit. The inhibition of translational initiation leads to the accumulation of the affected mRNA in cytoplasmic processing bodies (P-bodies), where mRNA degradation may subsequently occur. In some cases RISC-mediated translational repression is also observed for miRNAs that perfectly match the 3' untranslated region (3'-UTR). Can also up-regulate the translation of specific mRNAs under certain growth conditions. Binds to the AU element of the 3'-UTR of the TNF (TNF-alpha) mRNA and up-regulates translation under conditions of serum starvation. Also required for transcriptional gene silencing (TGS), in which short RNAs known as antigene RNAs or agRNAs direct the transcriptional repression of complementary promoter regions. The chain is Protein argonaute-2 (Ago2) from Rattus norvegicus (Rat).